The following is a 348-amino-acid chain: Noscapine synthase SDR1 (348 aa).

This sequence belongs to the NAD(P)-dependent epimerase/dehydratase family.

It carries out the reaction narcotine hemiacetal + NAD(+) = noscapine + NADH + H(+). It functions in the pathway alkaloid biosynthesis. Oxidoreductase that catalyzes the last step in the biosynthesis of the benzylisoquinoline alkaloid noscapine. Converts narcotine hemiacetal to noscapine. This Papaver somniferum (Opium poppy) protein is Noscapine synthase SDR1.